Consider the following 251-residue polypeptide: Osmotin-like protein (251 aa).

An N-terminal signal peptide occupies residues M1–A21. Intrachain disulfides connect C31–C226, C73–C83, C88–C94, C142–C214, C147–C197, C155–C165, C169–C178, and C179–C184. N233 carries N-linked (GlcNAc...) asparagine glycosylation.

It belongs to the thaumatin family.

The sequence is that of Osmotin-like protein (OLPA) from Nicotiana tabacum (Common tobacco).